Consider the following 931-residue polypeptide: MKASSGRCGLVRWLQVLLPFLLSLFPGALPVQIRYSIPEELAKNSVVGNLAKDLGLSVRDLPARKLRVSAEKEYFTVNPESGDLLVSDRIDREQICGKQPLCVLDFDTVAENPLNIFYIAVIVQDINDNTPLFKQTKINLKIGESTKPGTTFPLDPALDSDVGPNSLQRYHLNDNEYFDLAEKQTPDGRKYPELILKHSLDREEHSLHQLVLTAVDGGDPPQSGTTQIRIKVTDANDNPPVFSQDVYRVTLREDVPPGFFVLQVTATDRDEGINAEITYSFHNVDEQVKHFFNLNEKTGEITTKDDLDFEIASSYTLSIEAKDPGDLAAHCSIQVEILDDNDCAPEVIVTSVSTPLPEDSPPGTVIALIKTRDRDSGENGEVYCQVLGNAKFILKSSSKNYYKLVTDGALDREEIPEYNLTITATDGGKPPLSSSIIVTLHISDVNDNAPVFQQTSYMVHVAENNPPGASIAQISASDPDLGPSGQVSYSIVASDLKPREILSYVSVSAQSGVVFAQRAFDHEQLRAFELTLQARDQGSPALSANVSLRVLVGDLNDNAPRVLYPALGPDGSALFDMVPRAAEPGYLVTKVVAVDADSGHNAWLSYHVLQASEPGLFSLGLRTGEVRTARALGDRDAARQRLLVAVRDGGQPPLSATATLHLIFADSLQEVLPDLSDRREPSDPQAKLQFYLVVALALISVLFFLAVILAISLRLRLSSRSDAWDCFQPGLSSKPGPGVLPNYSEGTLPYSYNLCVASQSAKTEFNFLNITPELVPAQDLVCDNASWEQNTNHGAAGVPFASDTILKQAPPNTDWRFSQAQRPGTSGSQNGDDTGTWPNNQFDTEMLQAMILASASEAADGSSTLGGGAGTMGLSARYGPQFTLQHVPDYRQNVYIPGSNATLTNAAGKRDGKAPAGGNGNKKKSGKKEKK.

Residues Met1 to Pro30 form the signal peptide. Cadherin domains lie at Val31 to Phe133, Lys134 to Phe242, Ser243 to Val347, Ile348 to Phe452, Gln453 to Val562, and Asp570 to Leu675. Over Val31 to Tyr691 the chain is Extracellular. N-linked (GlcNAc...) asparagine glycans are attached at residues Asn419 and Asn545. The chain crosses the membrane as a helical span at residues Leu692–Ser712. The Cytoplasmic segment spans residues Leu713–Lys931. 2 disordered regions span residues Asp814–Asn840 and Ala901–Lys931. Residues Trp815–Asn840 are compositionally biased toward polar residues. The segment covering Asn921 to Lys931 has biased composition (basic residues).

It localises to the cell membrane. In terms of biological role, potential calcium-dependent cell-adhesion protein. May be involved in the establishment and maintenance of specific neuronal connections in the brain. The sequence is that of Protocadherin gamma-B2 (PCDHGB2) from Homo sapiens (Human).